The sequence spans 334 residues: Ornithine carbamoyltransferase (334 aa).

Residues 57–60 (STRT), Q84, R108, and 135–138 (HPTQ) each bind carbamoyl phosphate. Residues N168, D232, and 236 to 237 (SM) each bind L-ornithine. Carbamoyl phosphate contacts are provided by residues 274 to 275 (CL) and R321.

This sequence belongs to the aspartate/ornithine carbamoyltransferase superfamily. OTCase family.

The protein localises to the cytoplasm. The enzyme catalyses carbamoyl phosphate + L-ornithine = L-citrulline + phosphate + H(+). Its pathway is amino-acid biosynthesis; L-arginine biosynthesis; L-arginine from L-ornithine and carbamoyl phosphate: step 1/3. In terms of biological role, reversibly catalyzes the transfer of the carbamoyl group from carbamoyl phosphate (CP) to the N(epsilon) atom of ornithine (ORN) to produce L-citrulline. The polypeptide is Ornithine carbamoyltransferase (Actinobacillus pleuropneumoniae serotype 5b (strain L20)).